The sequence spans 3432 residues: MTKKPGGPGKNRAINMLKRGLPRVFPLVGVKRVVMSLLDGRGPVRFVLALITFFKFTALAPTKALLGRWRAVEKSVAMKHLTSFKRELGTLIDAVNKRGKKQNKRGGNESSIMWLASLAIVIACAGAMKLSNFQGKLLMTINNTDIADVIVIPTSKGENRCWVRAIDVGYMCEDTITYECPKLAVGNDPEDVDCWCDNQEVYVQYGRCTRTRHSKRSRRSVSVQTHGESSLVNKKEAWLDSTKATRYLMKTENWIIRNPGYAFLAAALGWMLGSNSGQRVVFTILLLLVAPAYSFNCLGMGNRDFIEGASGATWVDLVLEGDSCLTIMANDKPTLDVRMINIEASQLAEVRSYCYHASVTDISTVARCPTTGEAHNEKRADSSYVCKQGFTDRGWGNGCGLFGKGSIDTCAKFSCTSKAIGRTIQPENIKYEVGVFVHGTTTSENHGNYSAQVGASQAAKFTVTPNAPSITLKLGDYGEVTLDCEPRSGLNTEAFYVMTVGSKSFLVHREWFHDLSLPWTSPSSTAWRNRELLMEFEEAHATKQSVVALGSQEGGLHQALAGAIVVEYSSSVKLTSGHLKCRLKMDKLALKGTTYGMCTEKFSFAKNPADTGHGTVVIELTYSGSDGPCKIPIVSVASLNDMTPVGRLVTVNPFVATSSSNSKVLVEMEPPFGDSYIVVGRGDKQINHHWYKAGSTLGKAFSTTLKGAQRLAALGDTAWDFGSIGGVFNSIGKAVHQVFGGAFRTLFGGMSWITQGLMGALLLWMGVNARDRSIALAFLATGGVLVFLATNVHADTGCAIDITRKEMRCGSGIFVHNDVEAWVDRYKYLPETPRSLAKIVHKAHQEGVCGVRSVTRLEHQMWESVRDELNVLLKENAVDLSVVVNKPVGRYRSAPKRLSMTQEKFEMGWKAWGKSILFAPELANSTFVVDGPETKECPDERRAWNSMQIEDFGFGITSTRVWLKIREENTDECDGAIIGTAVKGHVAVHSDLSYWIESRLNDTWKLERAVFGEVKSCTWPETHTLWGDGVEESELIIPHTIAGPRSKHNRREGYKTQNQGPWDENGIVLDFDYCPGTKVTITEDCGKRGPSIRTTTDSGKLITDWCCRSCSLPPLRFRTENGCWYGMEIRPVRHDETTLVRSQVDAFNGEMIDPFQLGLLVMFLATQEVLRKRWTARLTIPAVLGALLVLMLGGITYIDLARYVVLVAAAFAEANSGGDVLHLALIAVFKIQPAFLVMNMLSARWTNQENMVLVLGAAFFQLASVDLQIGVHGILNAAAIAWMIVRAITFPTTSTVAMPVLALLTPGMRALYLDTYRIILLVIGICSLLQERRKTMAKKKGAVLLGLALTSTGWFSPTTIAAGLMVCNPNKKRGWPATEFLSAVGLMFAIVGGLAELDIESMSIPFMLAGLMAVSYVISGKATDMWLDRAADISWEMEAAITGSSRRLDVKLDDDGDFHLIDDPGVPWKVWLLRMSCIGLAALTPWAIVPAAFGYWLTLKTTKRGGVFWDTPSPKPCLKGDTTTGVYRIMARGILGTYQAGVGVMYENVFHTLWHTTRGAAIMSGEGKLTPYWGSVKEDRISYGGPWRFDRKWNGTDDVQVIVVEPGKPAVNIQTKPGVFRTPFGEIGAVSLDYPRGTSGSPILDSNGDIIGLYGNGVELGDGSYVSAIVQGDRQEEPVPDAYTPSMLKKRQMTVLDLHPGSGKTRKILPQIIKDAIQQRLRTAVLAPTRVVAAEMAEALRGLPVRYQTSAVQREHQGNEIVDVMCHATLTHRLMSPNRVPNYNLFVMDEAHFTDPASIAARGYIATKVELGEAAAIFMTATPPGTTDPFPDSNAPIHDLQDEIPDRAWSSGYEWITEYAGKTVWFVASVKMGNEIAMCLQRAGKKVIQLNRKSYDTEYPKCKNGDWDFVITTDISEMGANFGASRVIDCRKSVKPTILEEGEGRVILGNPSPITSASAAQRRGRVGRNPNQVGDEYHYGGATSEDDSNLAHWTEAKIMLDNIHMPNGLVAQLYGPEREKAFTMDGEYRLRGEEKKNFLELLRTADLPVWLAYKVASNGIQYTDRKWCFDGPRTNAILEDNTEVEIVTRMGERKILKPRWLDARVYADHQALKWFKDFAAGKRSAVSFIEVLGRMPEHFMGKTREALDTMYLVATAEKGGKAHRMALEELPDALETITLIVAITVMTGGFFLLMMQRKGIGKMGLGALVLTLATFFLWAAEVPGTKIAGTLLVALLLMVVLIPEPEKQRSQTDNQLAVFLICVLTVVGVVAANEYGMLEKTKADLKSMFGGRTQAPGLTGLPSMALDLRPATAWALYGGSTVVLTPLLKHLITSEYVTTSLASISSQAGSLFVLPRGVPFTDLDLTVGLVFLGCWGQITLTTFLTAMVLVTLHYGYMLPGWQAEALRAAQRRTAAGIMKNAVVDGMVATDVPELERTTPLMQKKVGQVLLIGVSVAAFLVNPNVTTVREAGVLVTAATLTLWDNGASAVWNSTTATGLCHVMRGSYLAGGSIAWTLIKNADKPSLKRGRPGGRTLGEQWKEKLNAMSRDEFFKYRREAIIEVDRTEARRARRENNIVGGHPVSRGSAKLRWLVEKGFVSPIGKVIDLGCGRGGWSYYAATLKKVQEVKGYTKGGAGHEEPMLMQSYGWNLVSLKSGVDVFYKPSEPSDTLFCDIGESSPSPEVEEQRTLRVLEMTSDWLHRGPREFCIKVLCPYMPKVIEKMEVLQRRFGGGLVRLPLSRNSNHEMYWVSGAAGNVVHAVNMTSQVLLGRMDRTVWRGPKYEEDVNLGSGTRAVGKGEVHSNQEKIRKRIQKLREEFATTWHQDPEHPYRTWTYHGSYEVKATGSASSLVNGVVKLMSKPWDAIANVTTMAMTDTTPFGQQRVFKEKVDTKAPEPPAGVKEVLNETTNWLWAHLSREKRPRLCTKEEFIKKVNSNAALGAVFAEQNQWSTAREAVGDPLFWEMVDEERENHLRGECHTCIYNMMGKREKKPGEFGKAKGSRAIWFMWLGARYLEFEALGFLNEDHWLSRENSGGGVEGSGVQKLGYILRDIAGKQGGKMYADDTAGWDTRITRTDLENEAKVLELLDGEHRMLARAIIELTYRHKVVKVMRPAAGGKTVMDVISREDQRGSGQVVTYALNTFTNIAVQLVRLMEAEGVIGPQHLEQLPRKNKIAVRTWLFENGEERVTRMAISGDDCVVKPLDDRFATALHFLNAMSKVRKDIQEWKPSHGWHDWQQVPFCSNHFQEIVMKDGRSIVVPCRGQDELIGRARISPGAGWNVKDTACLAKAYAQMWLLLYFHRRDLRLMANAICSAVPVDWVPTGRTSWSIHSKGEWMTTEDMLQVWNRVWIEENEWMMDKTPITSWTDVPYVGKREDIWCGSLIGTRSRATWAENIYAAINQVRAVIGKENYVDYMSSLRRYEDVLIQEDRVI.

The tract at residues 2-15 (TKKPGGPGKNRAIN) is interaction with host EXOC1. Residues 2-109 (TKKPGGPGKN…KKQNKRGGNE (108 aa)) are Cytoplasmic-facing. A hydrophobic; homodimerization of capsid protein C region spans residues 37–72 (LLDGRGPVRFVLALITFFKFTALAPTKALLGRWRAV). A propeptide spans 106-127 (GGNESSIMWLASLAIVIACAGA) (ER anchor for the capsid protein C, removed in mature form by serine protease NS3). The chain crosses the membrane as a helical span at residues 110–130 (SSIMWLASLAIVIACAGAMKL). Residues 131–253 (SNFQGKLLMT…ATRYLMKTEN (123 aa)) lie on the Extracellular side of the membrane. The N-linked (GlcNAc...) asparagine; by host glycan is linked to N142. A helical membrane pass occupies residues 254-274 (WIIRNPGYAFLAAALGWMLGS). The Cytoplasmic portion of the chain corresponds to 275–279 (NSGQR). A helical membrane pass occupies residues 280-294 (VVFTILLLLVAPAYS). Residues 295 to 746 (FNCLGMGNRD…QVFGGAFRTL (452 aa)) are Extracellular-facing. 6 disulfides stabilise this stretch: C297-C324, C354-C410, C354-C415, C368-C399, C386-C410, and C386-C415. Residues 392–405 (DRGWGNGCGLFGKG) are fusion peptide. N-linked (GlcNAc...) asparagine; by host glycosylation occurs at N448. Cystine bridges form between C484/C581 and C598/C629. The chain crosses the membrane as a helical span at residues 747 to 767 (FGGMSWITQGLMGALLLWMGV). Over 768-773 (NARDRS) the chain is Cytoplasmic. A helical membrane pass occupies residues 774–794 (IALAFLATGGVLVFLATNVHA). Over 795–1219 (DTGCAIDITR…AFAEANSGGD (425 aa)) the chain is Extracellular. Cystine bridges form between C798–C809, C849–C937, C973–C1017, C1074–C1123, C1085–C1106, and C1107–C1110. N-linked (GlcNAc...) asparagine; by host glycosylation is found at N924 and N1001. Residues 1220 to 1240 (VLHLALIAVFKIQPAFLVMNM) form a helical membrane-spanning segment. Residues 1241 to 1250 (LSARWTNQEN) lie on the Cytoplasmic side of the membrane. The helical transmembrane segment at 1251–1271 (MVLVLGAAFFQLASVDLQIGV) threads the bilayer. Position 1272 (H1272) is a topological domain, lumenal. A helical transmembrane segment spans residues 1273–1293 (GILNAAAIAWMIVRAITFPTT). Topologically, residues 1294–1309 (STVAMPVLALLTPGMR) are cytoplasmic. A helical membrane pass occupies residues 1310 to 1330 (ALYLDTYRIILLVIGICSLLQ). Topologically, residues 1331 to 1341 (ERRKTMAKKKG) are lumenal. Residues 1342–1362 (AVLLGLALTSTGWFSPTTIAA) form a helical membrane-spanning segment. The Cytoplasmic portion of the chain corresponds to 1363–1374 (GLMVCNPNKKRG). Residues 1375–1395 (WPATEFLSAVGLMFAIVGGLA) traverse the membrane as a helical segment. Over 1396–1398 (ELD) the chain is Lumenal. Residues 1399 to 1419 (IESMSIPFMLAGLMAVSYVIS) traverse the membrane as a helical segment. The Cytoplasmic portion of the chain corresponds to 1420 to 1476 (GKATDMWLDRAADISWEMEAAITGSSRRLDVKLDDDGDFHLIDDPGVPWKVWLLRMS). The tract at residues 1427-1466 (LDRAADISWEMEAAITGSSRRLDVKLDDDGDFHLIDDPGV) is interacts with and activates NS3 protease. An intramembrane region (helical) is located at residues 1477–1497 (CIGLAALTPWAIVPAAFGYWL). Residues 1498–2173 (TLKTTKRGGV…RMALEELPDA (676 aa)) are Cytoplasmic-facing. Residues 1505 to 1682 (GGVFWDTPSP…DRQEEPVPDA (178 aa)) enclose the Peptidase S7 domain. Active-site charge relay system; for serine protease NS3 activity residues include H1555, D1579, and S1639. The Helicase ATP-binding domain maps to 1685-1841 (PSMLKKRQMT…DSNAPIHDLQ (157 aa)). The important for RNA-binding stretch occupies residues 1689-1692 (KKRQ). 1698–1705 (LHPGSGKT) lines the ATP pocket. Residues 1789–1792 (DEAH) carry the DEAH box motif. One can recognise a Helicase C-terminal domain in the interval 1852 to 2017 (GYEWITEYAG…GLVAQLYGPE (166 aa)). The residue at position 1893 (K1893) is an N6-acetyllysine; by host. The interval 1950–1969 (NPSPITSASAAQRRGRVGRN) is disordered. The interval 2168–2172 (EELPD) is regulates the ATPase activity of NS3 helicase. The helical transmembrane segment at 2174–2194 (LETITLIVAITVMTGGFFLLM) threads the bilayer. The Lumenal portion of the chain corresponds to 2195-2199 (MQRKG). The segment at residues 2200-2220 (IGKMGLGALVLTLATFFLWAA) is an intramembrane region (helical). Residue E2221 is a topological domain, lumenal. The helical transmembrane segment at 2222 to 2242 (VPGTKIAGTLLVALLLMVVLI) threads the bilayer. Topologically, residues 2243–2257 (PEPEKQRSQTDNQLA) are cytoplasmic. Residues 2258-2278 (VFLICVLTVVGVVAANEYGML) traverse the membrane as a helical segment. Topologically, residues 2279–2311 (EKTKADLKSMFGGRTQAPGLTGLPSMALDLRPA) are lumenal. The helical intramembrane region spans 2312–2332 (TAWALYGGSTVVLTPLLKHLI). Residues 2333–2368 (TSEYVTTSLASISSQAGSLFVLPRGVPFTDLDLTVG) are Lumenal-facing. Residues 2369–2389 (LVFLGCWGQITLTTFLTAMVL) traverse the membrane as a helical segment. Over 2390–2444 (VTLHYGYMLPGWQAEALRAAQRRTAAGIMKNAVVDGMVATDVPELERTTPLMQKK) the chain is Cytoplasmic. A helical membrane pass occupies residues 2445 to 2465 (VGQVLLIGVSVAAFLVNPNVT). At 2466 to 2469 (TVRE) the chain is on the lumenal side. The chain crosses the membrane as a helical span at residues 2470-2490 (AGVLVTAATLTLWDNGASAVW). The Cytoplasmic portion of the chain corresponds to 2491-3432 (NSTTATGLCH…DVLIQEDRVI (942 aa)). An mRNA cap 0-1 NS5-type MT domain is found at 2528–2793 (GRPGGRTLGE…DVNLGSGTRA (266 aa)). S2583 contributes to the S-adenosyl-L-methionine binding site. S2583 is subject to Phosphoserine. The active-site For 2'-O-MTase activity is K2588. Residues G2613, W2614, T2631, K2632, D2658, and V2659 each contribute to the S-adenosyl-L-methionine site. Residue D2673 is the For 2'-O-MTase activity of the active site. Residue I2674 participates in S-adenosyl-L-methionine binding. Catalysis depends on for 2'-O-MTase activity residues K2709 and E2745. Y2747 lines the S-adenosyl-L-methionine pocket. Zn(2+) is bound by residues E2967, H2971, C2976, and C2979. The region spanning 3057–3209 (GKMYADDTAG…KPLDDRFATA (153 aa)) is the RdRp catalytic domain. Zn(2+) contacts are provided by H3244, C3260, and C3379.

The protein in the N-terminal section; belongs to the class I-like SAM-binding methyltransferase superfamily. mRNA cap 0-1 NS5-type methyltransferase family. As to quaternary structure, homodimer. Interacts (via N-terminus) with host EXOC1 (via C-terminus); this interaction results in EXOC1 degradation through the proteasome degradation pathway. Forms heterodimers with envelope protein E in the endoplasmic reticulum and Golgi. In terms of assembly, homodimer; in the endoplasmic reticulum and Golgi. Interacts with protein prM. Interacts with non-structural protein 1. Interacts with host HSPA5. As to quaternary structure, homodimer; Homohexamer when secreted. Interacts with envelope protein E. NS1 interacts with NS4B. Interacts with host complement protein CFH; this interaction leads to the degradation of C3. Interacts (via N-terminus) with serine protease NS3. In terms of assembly, forms a heterodimer with serine protease NS3. May form homooligomers. As to quaternary structure, forms a heterodimer with NS2B. Interacts with non-structural protein 2A (via N-terminus). Interacts with NS4B. Interacts with unphosphorylated RNA-directed RNA polymerase NS5; this interaction stimulates RNA-directed RNA polymerase NS5 guanylyltransferase activity. Interacts with host ILF2. Interacts with serine protease NS3. In terms of assembly, homodimer. Interacts with host STAT2; this interaction inhibits the phosphorylation of the latter, and, when all viral proteins are present (polyprotein), targets STAT2 for degradation. Interacts with serine protease NS3. It depends on Mn(2+) as a cofactor. Mg(2+) is required as a cofactor. Specific enzymatic cleavages in vivo yield mature proteins. Cleavages in the lumen of endoplasmic reticulum are performed by host signal peptidase, whereas cleavages in the cytoplasmic side are performed by serine protease NS3. Signal cleavage at the 2K-4B site requires a prior NS3 protease-mediated cleavage at the 4A-2K site. Post-translationally, cleaved in post-Golgi vesicles by a host furin, releasing the mature small envelope protein M, and peptide pr. This cleavage is incomplete as up to 30% of viral particles still carry uncleaved prM. In terms of processing, N-glycosylated. N-glycosylated. The excreted form is glycosylated and this is required for efficient secretion of the protein from infected cells. Post-translationally, acetylated by host KAT5. Acetylation modulates NS3 RNA-binding and unwinding activities and plays an important positive role for viral replication. In terms of processing, phosphorylated on serines residues. This phosphorylation may trigger NS5 nuclear localization.

Its subcellular location is the host endoplasmic reticulum membrane. It localises to the virion. It is found in the host nucleus. The protein localises to the host cytoplasm. The protein resides in the host perinuclear region. Its subcellular location is the secreted. It localises to the virion membrane. It is found in the host cell surface. It catalyses the reaction Selective hydrolysis of -Xaa-Xaa-|-Yaa- bonds in which each of the Xaa can be either Arg or Lys and Yaa can be either Ser or Ala.. The catalysed reaction is a ribonucleoside 5'-triphosphate + H2O = a ribonucleoside 5'-diphosphate + phosphate + H(+). The enzyme catalyses RNA(n) + a ribonucleoside 5'-triphosphate = RNA(n+1) + diphosphate. It carries out the reaction ATP + H2O = ADP + phosphate + H(+). It catalyses the reaction a 5'-end (5'-triphosphoguanosine)-ribonucleoside in mRNA + S-adenosyl-L-methionine = a 5'-end (N(7)-methyl 5'-triphosphoguanosine)-ribonucleoside in mRNA + S-adenosyl-L-homocysteine. The catalysed reaction is a 5'-end (N(7)-methyl 5'-triphosphoguanosine)-ribonucleoside in mRNA + S-adenosyl-L-methionine = a 5'-end (N(7)-methyl 5'-triphosphoguanosine)-(2'-O-methyl-ribonucleoside) in mRNA + S-adenosyl-L-homocysteine + H(+). Its function is as follows. Plays a role in virus budding by binding to the cell membrane and gathering the viral RNA into a nucleocapsid that forms the core of a mature virus particle. During virus entry, may induce genome penetration into the host cytoplasm after hemifusion induced by the surface proteins. Can migrate to the cell nucleus where it modulates host functions. Overcomes the anti-viral effects of host EXOC1 by sequestering and degrading the latter through the proteasome degradation pathway. Inhibits RNA silencing by interfering with host Dicer. In terms of biological role, prevents premature fusion activity of envelope proteins in trans-Golgi by binding to envelope protein E at pH6.0. After virion release in extracellular space, gets dissociated from E dimers. Functionally, acts as a chaperone for envelope protein E during intracellular virion assembly by masking and inactivating envelope protein E fusion peptide. prM is the only viral peptide matured by host furin in the trans-Golgi network probably to avoid catastrophic activation of the viral fusion activity in acidic Golgi compartment prior to virion release. prM-E cleavage is inefficient, and many virions are only partially matured. These uncleaved prM would play a role in immune evasion. Its function is as follows. May play a role in virus budding. Exerts cytotoxic effects by activating a mitochondrial apoptotic pathway through M ectodomain. May display a viroporin activity. Binds to host cell surface receptor and mediates fusion between viral and cellular membranes. Efficient virus attachment to cell is, at least in part, mediated by host HSPA5. Envelope protein is synthesized in the endoplasmic reticulum in the form of heterodimer with protein prM. They play a role in virion budding in the ER, and the newly formed immature particle is covered with 60 spikes composed of heterodimer between precursor prM and envelope protein E. The virion is transported to the Golgi apparatus where the low pH causes dissociation of PrM-E heterodimers and formation of E homodimers. prM-E cleavage is inefficient, and many virions are only partially matured. These uncleaved prM would play a role in immune evasion. In terms of biological role, involved in immune evasion, pathogenesis and viral replication. Once cleaved off the polyprotein, is targeted to three destinations: the viral replication cycle, the plasma membrane and the extracellular compartment. Essential for viral replication. Required for formation of the replication complex and recruitment of other non-structural proteins to the ER-derived membrane structures. Excreted as a hexameric lipoparticle that plays a role against host immune response. Antagonizing the complement function. Binds to the host macrophages and dendritic cells. Inhibits signal transduction originating from Toll-like receptor 3 (TLR3). Functionally, component of the viral RNA replication complex that functions in virion assembly and antagonizes the host alpha/beta interferon antiviral response. Its function is as follows. Required cofactor for the serine protease function of NS3. May have membrane-destabilizing activity and form viroporins. Displays three enzymatic activities: serine protease, NTPase and RNA helicase. NS3 serine protease, in association with NS2B, performs its autocleavage and cleaves the polyprotein at dibasic sites in the cytoplasm: C-prM, NS2A-NS2B, NS2B-NS3, NS3-NS4A, NS4A-2K and NS4B-NS5. NS3 RNA helicase binds RNA and unwinds dsRNA in the 3' to 5' direction. In terms of biological role, regulates the ATPase activity of the NS3 helicase activity. NS4A allows NS3 helicase to conserve energy during unwinding. Functionally, functions as a signal peptide for NS4B and is required for the interferon antagonism activity of the latter. Its function is as follows. Induces the formation of ER-derived membrane vesicles where the viral replication takes place. Inhibits interferon (IFN)-induced host STAT1 phosphorylation and nuclear translocation, thereby preventing the establishment of cellular antiviral state by blocking the IFN-alpha/beta pathway. Inhibits STAT2 translocation in the nucleus after IFN-alpha treatment. Replicates the viral (+) and (-) RNA genome. Performs the capping of genomes in the cytoplasm. NS5 methylates viral RNA cap at guanine N-7 and ribose 2'-O positions. Besides its role in RNA genome replication, also prevents the establishment of cellular antiviral state by blocking the interferon-alpha/beta (IFN-alpha/beta) signaling pathway. Inhibits host TYK2 and STAT2 phosphorylation, thereby preventing activation of JAK-STAT signaling pathway. The chain is Genome polyprotein from Japanese encephalitis virus (strain M28) (JEV).